The primary structure comprises 421 residues: 3-isopropylmalate dehydratase large subunit (421 aa).

Cys302, Cys362, and Cys365 together coordinate [4Fe-4S] cluster.

Belongs to the aconitase/IPM isomerase family. LeuC type 2 subfamily. In terms of assembly, heterodimer of LeuC and LeuD. [4Fe-4S] cluster is required as a cofactor.

It carries out the reaction (2R,3S)-3-isopropylmalate = (2S)-2-isopropylmalate. It functions in the pathway amino-acid biosynthesis; L-leucine biosynthesis; L-leucine from 3-methyl-2-oxobutanoate: step 2/4. Functionally, catalyzes the isomerization between 2-isopropylmalate and 3-isopropylmalate, via the formation of 2-isopropylmaleate. The chain is 3-isopropylmalate dehydratase large subunit from Campylobacter concisus (strain 13826).